The chain runs to 176 residues: Translation initiation factor IF-3 (176 aa).

It belongs to the IF-3 family. As to quaternary structure, monomer.

The protein resides in the cytoplasm. IF-3 binds to the 30S ribosomal subunit and shifts the equilibrium between 70S ribosomes and their 50S and 30S subunits in favor of the free subunits, thus enhancing the availability of 30S subunits on which protein synthesis initiation begins. This Streptococcus pyogenes serotype M18 (strain MGAS8232) protein is Translation initiation factor IF-3.